The chain runs to 640 residues: Chaperone protein DnaK (640 aa).

The residue at position 201 (Thr-201) is a Phosphothreonine; by autocatalysis. Residues 603-621 are compositionally biased toward low complexity; the sequence is AASADQGGAPGADAGNAGK. The disordered stretch occupies residues 603 to 625; it reads AASADQGGAPGADAGNAGKAQDD.

The protein belongs to the heat shock protein 70 family.

Its function is as follows. Acts as a chaperone. The protein is Chaperone protein DnaK of Stenotrophomonas maltophilia (strain K279a).